We begin with the raw amino-acid sequence, 457 residues long: UDP-glycosyltransferase 708C2 (457 aa).

His-32 serves as the catalytic Proton acceptor. His-32 is a binding site for an anthocyanidin. The active-site Charge relay is Asp-129. Thr-150 serves as a coordination point for UDP-alpha-D-glucose. The UDP stretch occupies residues 279 to 280; it reads NR. The UDP-alpha-D-glucose site is built by Val-341, Gln-343, His-358, Trp-361, Asn-362, Ser-363, and Glu-366. Gly-381 provides a ligand contact to an anthocyanidin. Asp-382 and Gln-383 together coordinate UDP-alpha-D-glucose.

This sequence belongs to the UDP-glycosyltransferase family. Expressed in cotyledons. Not detected in flowers, leaves, roots and hypocotyls.

The enzyme catalyses a 3'-hydro-2'-hydroxy-beta-oxodihydrochalcone + UDP-alpha-D-glucose = a 3'-(beta-D-glucopyranosyl)-2'-hydroxy-beta-oxodihydrochalcone + UDP + H(+). UDP-glucose-dependent glucosyltransferase catalyzing the c-glucosylation of 2-hydroxyflavanones (2-hydroxynaringenin, 2-hydroxyeriodictyol and 2-hydroxypinocembrin) and phloretin. No activity with flavanones, flavones or flavonols. This is UDP-glycosyltransferase 708C2 from Fagopyrum esculentum (Common buckwheat).